We begin with the raw amino-acid sequence, 137 residues long: Mobilization protein B (137 aa).

Interacts with MobA and MobC to form the relaxosome.

Its function is as follows. This protein is essential to promote the specific transfer of the plasmid in the presence of conjugative plasmids. In Escherichia coli, this protein is Mobilization protein B (mobB).